The sequence spans 360 residues: Protein Wnt-2 (360 aa).

The N-terminal stretch at 1–25 is a signal peptide; sequence MNAPVGGIWLWLPLLLTWLSPEVSS. 11 cysteine pairs are disulfide-bonded: C76-C87, C127-C135, C137-C157, C206-C220, C208-C215, C278-C309, C294-C304, C308-C348, C324-C339, C326-C336, and C331-C332. A lipid anchor (O-palmitoleoyl serine; by PORCN) is attached at S212. The N-linked (GlcNAc...) asparagine glycan is linked to N295.

The protein belongs to the Wnt family. In terms of processing, palmitoleoylation is required for efficient binding to frizzled receptors. Depalmitoleoylation leads to Wnt signaling pathway inhibition.

The protein localises to the secreted. It localises to the extracellular space. The protein resides in the extracellular matrix. Functionally, ligand for members of the frizzled family of seven transmembrane receptors. Probable developmental protein. May be a signaling molecule which affects the development of discrete regions of tissues. Is likely to signal over only few cell diameters. This is Protein Wnt-2 (WNT2) from Rhinolophus ferrumequinum (Greater horseshoe bat).